The chain runs to 368 residues: MWIKELELKHYRNYDHLLASFSSGLNVFIGNNAQGKTNFLEAIYFLSLTRSHRTRADKELIHFDHSTVSLTGKIQRISGTVDLEINLSDKGRVTKINALKQAKLSDYIGTMMVVLFAPEDLQLVKGAPSLRRKFIDIDLGQIKPVYLSELSHYNHVLKQRNSYLKSAQQIDAAFLAVLDEQLAGYGARVMEHRIDFINALEKEANTHHQAISNGLESLSLSYQSSVVFDKKTNIYQQFLHQLEKNHQKDFFRKNTSVGPHRDDLAFYINGMNANFASQGQHRSLILSLKMAEVSLMKALTGDNPILLLDDVMSELDNTRQTKLLETVIKENVQTFITTTSLDHLSQLPEGIRIFHVTKGTVQIDSDIH.

30-37 (GNNAQGKT) serves as a coordination point for ATP.

It belongs to the RecF family.

Its subcellular location is the cytoplasm. Functionally, the RecF protein is involved in DNA metabolism; it is required for DNA replication and normal SOS inducibility. RecF binds preferentially to single-stranded, linear DNA. It also seems to bind ATP. The sequence is that of DNA replication and repair protein RecF from Streptococcus pyogenes serotype M6 (strain ATCC BAA-946 / MGAS10394).